Consider the following 527-residue polypeptide: Glutamate--cysteine ligase (527 aa).

The protein belongs to the glutamate--cysteine ligase type 1 family. Type 1 subfamily.

The catalysed reaction is L-cysteine + L-glutamate + ATP = gamma-L-glutamyl-L-cysteine + ADP + phosphate + H(+). The protein operates within sulfur metabolism; glutathione biosynthesis; glutathione from L-cysteine and L-glutamate: step 1/2. The protein is Glutamate--cysteine ligase of Bordetella bronchiseptica (strain ATCC BAA-588 / NCTC 13252 / RB50) (Alcaligenes bronchisepticus).